Reading from the N-terminus, the 230-residue chain is Biosynthetic peptidoglycan transglycosylase (230 aa).

A helical transmembrane segment spans residues 11-31 (VLLVLVALFVLYQLWIFTLVL).

It belongs to the glycosyltransferase 51 family.

It is found in the cell inner membrane. The enzyme catalyses [GlcNAc-(1-&gt;4)-Mur2Ac(oyl-L-Ala-gamma-D-Glu-L-Lys-D-Ala-D-Ala)](n)-di-trans,octa-cis-undecaprenyl diphosphate + beta-D-GlcNAc-(1-&gt;4)-Mur2Ac(oyl-L-Ala-gamma-D-Glu-L-Lys-D-Ala-D-Ala)-di-trans,octa-cis-undecaprenyl diphosphate = [GlcNAc-(1-&gt;4)-Mur2Ac(oyl-L-Ala-gamma-D-Glu-L-Lys-D-Ala-D-Ala)](n+1)-di-trans,octa-cis-undecaprenyl diphosphate + di-trans,octa-cis-undecaprenyl diphosphate + H(+). It participates in cell wall biogenesis; peptidoglycan biosynthesis. Peptidoglycan polymerase that catalyzes glycan chain elongation from lipid-linked precursors. This is Biosynthetic peptidoglycan transglycosylase from Aromatoleum aromaticum (strain DSM 19018 / LMG 30748 / EbN1) (Azoarcus sp. (strain EbN1)).